Consider the following 172-residue polypeptide: Lipoprotein signal peptidase (172 aa).

Helical transmembrane passes span 10–30 (LIWL…KAWV), 68–88 (WQLW…AFWL), and 98–118 (SALP…DRLM). Residues Asp124 and Asp142 contribute to the active site. The chain crosses the membrane as a helical span at residues 138-158 (FNIADSAIVGGAIGIAVFGLF).

The protein belongs to the peptidase A8 family.

The protein resides in the cell inner membrane. The enzyme catalyses Release of signal peptides from bacterial membrane prolipoproteins. Hydrolyzes -Xaa-Yaa-Zaa-|-(S,diacylglyceryl)Cys-, in which Xaa is hydrophobic (preferably Leu), and Yaa (Ala or Ser) and Zaa (Gly or Ala) have small, neutral side chains.. It participates in protein modification; lipoprotein biosynthesis (signal peptide cleavage). Functionally, this protein specifically catalyzes the removal of signal peptides from prolipoproteins. This chain is Lipoprotein signal peptidase, found in Xanthomonas axonopodis pv. citri (strain 306).